Consider the following 170-residue polypeptide: Arginine repressor (170 aa).

The protein belongs to the ArgR family.

The protein resides in the cytoplasm. It functions in the pathway amino-acid biosynthesis; L-arginine biosynthesis [regulation]. In terms of biological role, regulates arginine biosynthesis genes. In Mycobacterium tuberculosis (strain ATCC 25177 / H37Ra), this protein is Arginine repressor.